The following is a 414-amino-acid chain: Glucose-1-phosphate adenylyltransferase (414 aa).

Alpha-D-glucose 1-phosphate-binding positions include Gly164, 184-185 (EK), and Ser204.

This sequence belongs to the bacterial/plant glucose-1-phosphate adenylyltransferase family. Homotetramer.

The enzyme catalyses alpha-D-glucose 1-phosphate + ATP + H(+) = ADP-alpha-D-glucose + diphosphate. It functions in the pathway glycan biosynthesis; glycogen biosynthesis. Functionally, involved in the biosynthesis of ADP-glucose, a building block required for the elongation reactions to produce glycogen. Catalyzes the reaction between ATP and alpha-D-glucose 1-phosphate (G1P) to produce pyrophosphate and ADP-Glc. This is Glucose-1-phosphate adenylyltransferase from Acidothermus cellulolyticus (strain ATCC 43068 / DSM 8971 / 11B).